A 77-amino-acid polypeptide reads, in one-letter code: Conotoxin PnMEKL-04 (77 aa).

The signal sequence occupies residues 1–19 (MEKLTILLLVAAVLMSTQA). Residues 20–45 (LPQGGGENRLKENIKFLLKRKTAADR) constitute a propeptide that is removed on maturation. 3 disulfide bridges follow: cysteine 51-cysteine 65, cysteine 58-cysteine 69, and cysteine 64-cysteine 73.

It belongs to the conotoxin O2 superfamily. As to expression, expressed by the venom duct.

It localises to the secreted. This Conus pennaceus (Feathered cone) protein is Conotoxin PnMEKL-04.